We begin with the raw amino-acid sequence, 187 residues long: Elongation factor P (187 aa).

It belongs to the elongation factor P family.

Its subcellular location is the cytoplasm. It functions in the pathway protein biosynthesis; polypeptide chain elongation. In terms of biological role, involved in peptide bond synthesis. Stimulates efficient translation and peptide-bond synthesis on native or reconstituted 70S ribosomes in vitro. Probably functions indirectly by altering the affinity of the ribosome for aminoacyl-tRNA, thus increasing their reactivity as acceptors for peptidyl transferase. This chain is Elongation factor P, found in Mycobacterium ulcerans (strain Agy99).